The primary structure comprises 274 residues: 2-dehydro-3-deoxyphosphooctonate aldolase (274 aa).

It belongs to the KdsA family.

Its subcellular location is the cytoplasm. The catalysed reaction is D-arabinose 5-phosphate + phosphoenolpyruvate + H2O = 3-deoxy-alpha-D-manno-2-octulosonate-8-phosphate + phosphate. The protein operates within carbohydrate biosynthesis; 3-deoxy-D-manno-octulosonate biosynthesis; 3-deoxy-D-manno-octulosonate from D-ribulose 5-phosphate: step 2/3. Its pathway is bacterial outer membrane biogenesis; lipopolysaccharide biosynthesis. In Legionella pneumophila (strain Lens), this protein is 2-dehydro-3-deoxyphosphooctonate aldolase.